Consider the following 638-residue polypeptide: MEEKRSSCPYADEAVCELVEHAKELNEEIPEIETPHIRWPVQFPKCPYGKQGVWCNICSNGPCRITEKTPRGVCGATADVIVARNFLRHVAAGAACYVHCLENAARALKSVADEESPYEIADEKALRHAAEVYGLDTSGKPEDVAEEIAEFILEDIYRPRYEESEVFKAVVPDWRIEMYEEMGLIPGGAKSEIHDALVKTSTNLNSDPVDMLLHVLRLGLITGPVALFGVETINDILFGSPKITQTEGGPGILDPDYVNIMTTGHQMALMKYLTDAAEKLEEEAKAAGAKGIRIIGATCVGDDFEARAEHLPDTYAGFAGNNFATEALAATGLVDAIVSEFNCTFPGLKFYKEKLDVELVAVDDVAKVWGAELILWDPERAEEVAEEAVQRAIEAFKERRSKHEDKIMEPKHRHENVVGFGYFSIEEAVGWENVLKLIEEGTIRGVCAIMGCTNLSSGGHNVPAVELAKEMIKRDVLVLGAGCVNGAFANAGLFNPEAAELAGDNLRQVCEELGIPPVLHYGPCLAIGKIEHLVFEIAEILREKTGEEIDIPDVPAVASAPQWLEEQALADASSALALGITLHVSPVPPVTGSELVTKTLLEDLPDLTGGELIVETDMKRAGEILAEKIEEKRKRLGI.

Cys-46, Cys-55, Cys-58, Cys-63, and Cys-74 together coordinate [4Fe-4S] cluster. [Ni-4Fe-5S] cluster is bound by residues His-265, Cys-299, Cys-343, Cys-452, Cys-483, and Cys-524.

The protein belongs to the Ni-containing carbon monoxide dehydrogenase family. Homodimer. [4Fe-4S] cluster is required as a cofactor. [Ni-4Fe-5S] cluster serves as cofactor.

It carries out the reaction CO + 2 oxidized [2Fe-2S]-[ferredoxin] + H2O = 2 reduced [2Fe-2S]-[ferredoxin] + CO2 + 2 H(+). CODH oxidizes carbon monoxide coupled, via CooF, to the reduction of a hydrogen cation by a hydrogenase (possibly CooH). The polypeptide is Carbon monoxide dehydrogenase (cooS) (Methanopyrus kandleri (strain AV19 / DSM 6324 / JCM 9639 / NBRC 100938)).